Reading from the N-terminus, the 200-residue chain is ATP synthase subunit s, mitochondrial (200 aa).

Residues 1 to 25 (MMLFGKVSQQLCGIKKLPWSCDSRY) constitute a mitochondrion transit peptide. The segment at 1–61 (MMLFGKVSQQ…SEWLLRCGAM (61 aa)) is N-terminal domain. Gly-59 is a Mg(2+) binding site. LRR repeat units lie at residues 62–87 (VRYHGQERWQTDYNHLPTGPLDKYKI), 88–116 (QAIDATNSCIMSIGFDHMVGLQHVEKIRL), 117–141 (CKCHFIEDDCLLRLGQLENLQKSIL), and 142–173 (EMEIISCGNITDKGIIASRHLRNLKYLLLSDL). A Mg(2+)-binding site is contributed by Thr-93.

This sequence belongs to the ATP synthase subunit s family. As to quaternary structure, homotetramer. Associates with ATP synthase.

Its subcellular location is the mitochondrion. The protein resides in the mitochondrion inner membrane. Its function is as follows. Involved in regulation of mitochondrial membrane ATP synthase. Necessary for H(+) conduction of ATP synthase. Facilitates energy-driven catalysis of ATP synthesis by blocking a proton leak through an alternative proton exit pathway. The protein is ATP synthase subunit s, mitochondrial (DMAC2L) of Macaca fascicularis (Crab-eating macaque).